A 626-amino-acid polypeptide reads, in one-letter code: MASLCSNSSTTSLKTPFTSLGSTPKPCQLFLHGKRNKAFKVSCKVTNTNGNQDETNSVDRRNVLLGLGGLYGVANAIPLAASAAPTPPPDLSSCSIARIDENQVVSYSCCAPKPDDMEKVPYYKFPSMTKLRVRQPAHEADEEYIAKYNCAVTKMKDLDKTQPDNPIGFKQQANIHCAYCNGGYSIDGKVLQVHNSWLFFPFHRWYLYFYERILGSLIDDPTFGLPFWNWDHPKGMRFPPMFDVPGTALYDERRGDQIHNGNGIDLGYFGDQVETTQLQLMTNNLTLMYRQLVTNSPCPLMSLVDLTLFGSTVEDAGTVENIPHSPVHIWVGTRRGSVLPVGKISNGEDMGNFYSAGLDPLFYCHHSNVDRMWNEWKATGGKRTDIQNKDWLNSEFFFYDENGNPFKVRVRDCLDTKKMGYDYHATATPWRNFKPKTKASAGKVNTGSIPPESQVFPLAKLDKAISFSINRPASSRTQQEKNAQEEVLTFNAIKYDNRDYIRFDVFLNVDNNVNANELDKAEFAGSYTSLPHVHRVGDPKHTATATLRLAITELLEDIGLEDEDTIAVTLVPKKGDISIGGVEIKLAIVKLVCVVNLLTLQLNKDRFCYDSVFVCWFVCLFFNFHV.

The N-terminal 83 residues, 1–83 (MASLCSNSST…ANAIPLAASA (83 aa)), are a transit peptide targeting the chloroplast. 2 cysteine pairs are disulfide-bonded: Cys94–Cys110 and Cys109–Cys177. Cu cation is bound by residues His176, His194, His203, His324, His328, and His366. The 2'-(S-cysteinyl)-histidine (Cys-His) cross-link spans 180–194 (CNGGYSIDGKVLQVH).

The protein belongs to the tyrosinase family. The cofactor is Cu(2+).

Its subcellular location is the plastid. It localises to the chloroplast thylakoid lumen. The enzyme catalyses 2 catechol + O2 = 2 1,2-benzoquinone + 2 H2O. In terms of biological role, catalyzes the oxidation of mono- and o-diphenols to o-diquinones. The sequence is that of Polyphenol oxidase C, chloroplastic from Solanum lycopersicum (Tomato).